Consider the following 338-residue polypeptide: Anthranilate phosphoribosyltransferase (338 aa).

5-phospho-alpha-D-ribose 1-diphosphate-binding positions include G81, 84–85 (GD), T89, 91–94 (NIST), 109–117 (KHGNRALSS), and A121. Anthranilate is bound at residue G81. Mg(2+) is bound at residue S93. N112 contributes to the anthranilate binding site. R167 contacts anthranilate. Mg(2+)-binding residues include D225 and E226.

This sequence belongs to the anthranilate phosphoribosyltransferase family. Homodimer. Requires Mg(2+) as cofactor.

It catalyses the reaction N-(5-phospho-beta-D-ribosyl)anthranilate + diphosphate = 5-phospho-alpha-D-ribose 1-diphosphate + anthranilate. Its pathway is amino-acid biosynthesis; L-tryptophan biosynthesis; L-tryptophan from chorismate: step 2/5. Its function is as follows. Catalyzes the transfer of the phosphoribosyl group of 5-phosphorylribose-1-pyrophosphate (PRPP) to anthranilate to yield N-(5'-phosphoribosyl)-anthranilate (PRA). This is Anthranilate phosphoribosyltransferase from Rhizobium johnstonii (strain DSM 114642 / LMG 32736 / 3841) (Rhizobium leguminosarum bv. viciae).